Consider the following 273-residue polypeptide: Hydroxyethylthiazole kinase (273 aa).

Position 49 (methionine 49) interacts with substrate. Residues lysine 125 and threonine 171 each contribute to the ATP site. A substrate-binding site is contributed by glycine 198.

Belongs to the Thz kinase family. Mg(2+) serves as cofactor.

The enzyme catalyses 5-(2-hydroxyethyl)-4-methylthiazole + ATP = 4-methyl-5-(2-phosphooxyethyl)-thiazole + ADP + H(+). The protein operates within cofactor biosynthesis; thiamine diphosphate biosynthesis; 4-methyl-5-(2-phosphoethyl)-thiazole from 5-(2-hydroxyethyl)-4-methylthiazole: step 1/1. Its function is as follows. Catalyzes the phosphorylation of the hydroxyl group of 4-methyl-5-beta-hydroxyethylthiazole (THZ). The polypeptide is Hydroxyethylthiazole kinase (Natranaerobius thermophilus (strain ATCC BAA-1301 / DSM 18059 / JW/NM-WN-LF)).